Here is a 399-residue protein sequence, read N- to C-terminus: Phosphoprotein (399 aa).

Polar residues-rich tracts occupy residues Ala-30–Thr-46 and Gly-82–Pro-112. The disordered stretch occupies residues Ala-30–Pro-112. The multimerization stretch occupies residues Asn-224–Gly-287. Positions Ala-226–Thr-253 form a coiled coil.

This sequence belongs to the rubulavirus/avulavirus P protein family. In terms of assembly, homotetramer. Interacts (via multimerization domain) with polymerase L; this interaction forms the polymerase L-P complex. Interacts (via N-terminus) with N0 (via Ncore); this interaction allows P to chaperon N0 to avoid N polymerization before encapsidation. Interacts (via C-terminus) with N-RNA template; this interaction positions the polymerase on the template for both transcription and replication.

Essential cofactor of the RNA polymerase L that plays a central role in the transcription and replication by forming the polymerase complex with RNA polymerase L and recruiting L to the genomic N-RNA template for RNA synthesis. Also plays a central role in the encapsidation of nascent RNA chains by forming the encapsidation complex with the nucleocapsid protein N (N-P complex). Acts as a chaperone for newly synthesized free N protein, so-called N0, allowing encapsidation of nascent RNA chains during replication. The nucleoprotein protein N prevents excessive phosphorylation of P, which leads to down-regulation of viral transcription/ replication. Participates, together with N, in the formation of viral factories (viroplasms), which are large inclusions in the host cytoplasm where replication takes place. This chain is Phosphoprotein (P/V), found in Human parainfluenza 4a virus (strain Toshiba) (HPIV-4a).